Here is a 159-residue protein sequence, read N- to C-terminus: RNA pyrophosphohydrolase (159 aa).

The Nudix hydrolase domain maps to 6–149 (GFRPNVGIIL…KREVYRRALK (144 aa)). The short motif at 38–59 (GGINPDETPEDALYRELNEEVG) is the Nudix box element.

Belongs to the Nudix hydrolase family. RppH subfamily. The cofactor is a divalent metal cation.

In terms of biological role, accelerates the degradation of transcripts by removing pyrophosphate from the 5'-end of triphosphorylated RNA, leading to a more labile monophosphorylated state that can stimulate subsequent ribonuclease cleavage. In Pseudomonas fluorescens (strain SBW25), this protein is RNA pyrophosphohydrolase.